The sequence spans 227 residues: PKHD-type hydroxylase BURPS668_A1690 (227 aa).

The 101-residue stretch at 78 to 178 (KVFPPLFNRY…RVASFFWIQS (101 aa)) folds into the Fe2OG dioxygenase domain. 3 residues coordinate Fe cation: H96, D98, and H159. R169 is a binding site for 2-oxoglutarate.

It depends on Fe(2+) as a cofactor. L-ascorbate is required as a cofactor.

This is PKHD-type hydroxylase BURPS668_A1690 from Burkholderia pseudomallei (strain 668).